The chain runs to 228 residues: Thiamine-phosphate synthase (228 aa).

4-amino-2-methyl-5-(diphosphooxymethyl)pyrimidine is bound by residues 57-61 (QLRDK) and Asn89. The Mg(2+) site is built by Asp90 and Asp109. Ser128 is a binding site for 4-amino-2-methyl-5-(diphosphooxymethyl)pyrimidine. 154–156 (TPS) provides a ligand contact to 2-[(2R,5Z)-2-carboxy-4-methylthiazol-5(2H)-ylidene]ethyl phosphate. 4-amino-2-methyl-5-(diphosphooxymethyl)pyrimidine is bound at residue Lys157. Residues Gly185 and 205–206 (IS) contribute to the 2-[(2R,5Z)-2-carboxy-4-methylthiazol-5(2H)-ylidene]ethyl phosphate site.

The protein belongs to the thiamine-phosphate synthase family. Mg(2+) serves as cofactor.

It catalyses the reaction 2-[(2R,5Z)-2-carboxy-4-methylthiazol-5(2H)-ylidene]ethyl phosphate + 4-amino-2-methyl-5-(diphosphooxymethyl)pyrimidine + 2 H(+) = thiamine phosphate + CO2 + diphosphate. The catalysed reaction is 2-(2-carboxy-4-methylthiazol-5-yl)ethyl phosphate + 4-amino-2-methyl-5-(diphosphooxymethyl)pyrimidine + 2 H(+) = thiamine phosphate + CO2 + diphosphate. It carries out the reaction 4-methyl-5-(2-phosphooxyethyl)-thiazole + 4-amino-2-methyl-5-(diphosphooxymethyl)pyrimidine + H(+) = thiamine phosphate + diphosphate. It participates in cofactor biosynthesis; thiamine diphosphate biosynthesis; thiamine phosphate from 4-amino-2-methyl-5-diphosphomethylpyrimidine and 4-methyl-5-(2-phosphoethyl)-thiazole: step 1/1. Its function is as follows. Condenses 4-methyl-5-(beta-hydroxyethyl)thiazole monophosphate (THZ-P) and 2-methyl-4-amino-5-hydroxymethyl pyrimidine pyrophosphate (HMP-PP) to form thiamine monophosphate (TMP). In Roseiflexus castenholzii (strain DSM 13941 / HLO8), this protein is Thiamine-phosphate synthase.